A 149-amino-acid chain; its full sequence is Small ribosomal subunit protein uS9 (149 aa).

This sequence belongs to the universal ribosomal protein uS9 family.

It localises to the cytoplasm. This Oryza sativa subsp. indica (Rice) protein is Small ribosomal subunit protein uS9 (RPS16A).